An 88-amino-acid chain; its full sequence is MSETNERNRRHVYQGRVVSDKMDKTITVVVDTYKNHPVYNKRFRYSKKYYAQDENNEAKVGDTVRIMETRPLSRKKRFRLVKIVKKSV.

This sequence belongs to the universal ribosomal protein uS17 family. In terms of assembly, part of the 30S ribosomal subunit.

Functionally, one of the primary rRNA binding proteins, it binds specifically to the 5'-end of 16S ribosomal RNA. This chain is Small ribosomal subunit protein uS17, found in Lactobacillus acidophilus (strain ATCC 700396 / NCK56 / N2 / NCFM).